A 465-amino-acid chain; its full sequence is Ubiquitin carboxyl-terminal hydrolase UCH54 (465 aa).

The UCH catalytic domain maps to 11-333; that stretch reads EWCLIESNPC…VRFNIIAVMK (323 aa). Cysteine 145 acts as the Nucleophile in catalysis. Catalysis depends on histidine 220, which acts as the Proton donor. The interval 244–293 is disordered; that stretch reads INADEQNKPNPNNNNNNKDNDNDNNNNNNNNNNNNNNNNNNNNNNNNNNI. Over residues 251-292 the composition is skewed to low complexity; the sequence is KPNPNNNNNNKDNDNDNNNNNNNNNNNNNNNNNNNNNNNNNN. The region spanning 432-460 is the ULD domain; the sequence is NFYPFIMSSLNLMAKHKLLKDAYQKEKLK.

The protein belongs to the peptidase C12 family.

It carries out the reaction Thiol-dependent hydrolysis of ester, thioester, amide, peptide and isopeptide bonds formed by the C-terminal Gly of ubiquitin (a 76-residue protein attached to proteins as an intracellular targeting signal).. Its function is as follows. Thiol protease that recognizes and hydrolyzes a peptide bond at the C-terminal glycine of either ubiquitin or NEDD8. The chain is Ubiquitin carboxyl-terminal hydrolase UCH54 from Plasmodium falciparum (isolate 3D7).